The following is a 575-amino-acid chain: uncharacterized protein (575 aa).

Positions 1–120 constitute an HTH marR-type domain; sequence MKLIEHYVAL…YNMWLSEVFG (120 aa). Positions 26–49 form a DNA-binding region, H-T-H motif; sequence LTEIADCLFCTERNAKLILHKLEN. The interval 176-490 is solute-binding region; sequence EPKPHLVHGW…FGFLHLLLSE (315 aa).

The protein in the C-terminal section; belongs to the bacterial solute-binding protein 5 family.

This is an uncharacterized protein from Bacillus subtilis (strain 168).